A 281-amino-acid chain; its full sequence is 18S rRNA (guanine-N(7))-methyltransferase (281 aa).

Polar residues predominate over residues 212–231; it reads LPKGLTESQDADQASESMFT. Positions 212 to 281 are disordered; it reads LPKGLTESQD…YTGRKRKPRF (70 aa). The span at 242-256 shows a compositional bias: basic and acidic residues; it reads RDLVKKSREWVLEKK.

Belongs to the class I-like SAM-binding methyltransferase superfamily. BUD23/WBSCR22 family. As to quaternary structure, heterodimer with TRMT112; this heterodimerization is necessary for the metabolic stability and activity of the catalytic subunit BUD23. Interacts with GRIP1. May be ubiquitinated and targeted to degradation in response to pro-inflammatory cytokine signaling.

The protein localises to the nucleus. It localises to the nucleoplasm. The protein resides in the cytoplasm. It is found in the perinuclear region. The catalysed reaction is a guanosine in 18S rRNA + S-adenosyl-L-methionine = an N(7)-methylguanosine in 18S rRNA + S-adenosyl-L-homocysteine. S-adenosyl-L-methionine-dependent methyltransferase that specifically methylates the N(7) position of a guanine in 18S rRNA. Requires the methyltransferase adapter protein TRM112 for full rRNA methyltransferase activity. Involved in the pre-rRNA processing steps leading to small-subunit rRNA production independently of its RNA-modifying catalytic activity. Important for biogenesis end export of the 40S ribosomal subunit independent on its methyltransferase activity. Locus-specific steroid receptor coactivator. Potentiates transactivation by glucocorticoid (NR3C1), mineralocorticoid (NR3C2), androgen (AR) and progesterone (PGR) receptors. Required for the maintenance of open chromatin at the TSC22D3/GILZ locus to facilitate NR3C1 loading on the response elements. Required for maintenance of dimethylation on histone H3 'Lys-79' (H3K79me2), although direct histone methyltransferase activity is not observed in vitro. This chain is 18S rRNA (guanine-N(7))-methyltransferase, found in Mus musculus (Mouse).